The sequence spans 338 residues: Lipoate-protein ligase A (338 aa).

One can recognise a BPL/LPL catalytic domain in the interval 29–216 (PATQRVLFLW…AFFAHYGERI (188 aa)). ATP is bound by residues arginine 71, 76–79 (GAVF), and lysine 134. A (R)-lipoate-binding site is contributed by lysine 134.

It belongs to the LplA family. In terms of assembly, monomer.

It localises to the cytoplasm. It catalyses the reaction L-lysyl-[lipoyl-carrier protein] + (R)-lipoate + ATP = N(6)-[(R)-lipoyl]-L-lysyl-[lipoyl-carrier protein] + AMP + diphosphate + H(+). It functions in the pathway protein modification; protein lipoylation via exogenous pathway; protein N(6)-(lipoyl)lysine from lipoate: step 1/2. Its pathway is protein modification; protein lipoylation via exogenous pathway; protein N(6)-(lipoyl)lysine from lipoate: step 2/2. Its function is as follows. Catalyzes both the ATP-dependent activation of exogenously supplied lipoate to lipoyl-AMP and the transfer of the activated lipoyl onto the lipoyl domains of lipoate-dependent enzymes. The protein is Lipoate-protein ligase A of Salmonella paratyphi A (strain ATCC 9150 / SARB42).